Consider the following 240-residue polypeptide: MRLSEILAVALVTGATAYDLPDNLKQIYEKHKGKCSKVYQKGFTNGGHSDGKSFEYCGDIEGAIFMHSSAKGGQYTNMDVDCDGANNSAGKCSNDPSGQGVTAFKDEVKKFGIPDLDANLHPYIVFGNEEHSPQFKPQKYGMEPLSVMAVVCNGKLHYGIWGDTNGGTSTGEASLSMAELCFPEEKPDGDHGHDDNDVLYIGFTGKDAVLERVPLEGKKTEDFEDSIKSIGDKLVAGLKA.

The first 17 residues, 1–17, serve as a signal peptide directing secretion; the sequence is MRLSEILAVALVTGATA. Asn-86 carries an N-linked (GlcNAc...) asparagine glycan.

The protein belongs to the glycosyl hydrolase 75 family.

It is found in the secreted. The enzyme catalyses Endohydrolysis of beta-(1-&gt;4)-linkages between D-glucosamine residues in a partly acetylated chitosan.. Its function is as follows. Chitosanase catalyzing the endo-type cleavage of chitosan, the deacylated form of chitin. Chitosanase may be crucial in the degradation of the deacetylated portion of chitin in the fungal cell wall. Chitoolisaccharides produced by the hydrolysis of partially N-acetylated chitosan are known to have many biological activities, including antibacterial activity, immune-enhancing effects, and elicitor activity. The polypeptide is Endo-chitosanase B (csnB) (Aspergillus oryzae (Yellow koji mold)).